A 437-amino-acid chain; its full sequence is Enolase (437 aa).

Residue glutamine 162 participates in (2R)-2-phosphoglycerate binding. Glutamate 204 (proton donor) is an active-site residue. Positions 251, 297, and 324 each coordinate Mg(2+). Lysine 349, arginine 378, serine 379, and lysine 400 together coordinate (2R)-2-phosphoglycerate. Catalysis depends on lysine 349, which acts as the Proton acceptor.

The protein belongs to the enolase family. It depends on Mg(2+) as a cofactor.

The protein resides in the cytoplasm. It localises to the secreted. Its subcellular location is the cell surface. It carries out the reaction (2R)-2-phosphoglycerate = phosphoenolpyruvate + H2O. Its pathway is carbohydrate degradation; glycolysis; pyruvate from D-glyceraldehyde 3-phosphate: step 4/5. In terms of biological role, catalyzes the reversible conversion of 2-phosphoglycerate (2-PG) into phosphoenolpyruvate (PEP). It is essential for the degradation of carbohydrates via glycolysis. This Chlorobium chlorochromatii (strain CaD3) protein is Enolase.